A 335-amino-acid polypeptide reads, in one-letter code: NAC domain-containing protein 40 (335 aa).

The region spanning 14-156 (LFPGFRFSPT…ALVVCRLRKN (143 aa)) is the NAC domain. A DNA-binding region spans residues 112 to 162 (VGTKRTLVFHIGRAPRGERTEWIMHEYCIHGAPQDALVVCRLRKNADFRAS). Residues 245-254 (PTNPTHQETI) show a composition bias toward polar residues. The disordered stretch occupies residues 245-267 (PTNPTHQETISSESSSKRSKCGI). Residues 313–333 (VLATTVFLAILFSFFWTVLIA) form a helical membrane-spanning segment.

Proteolytically cleaved, probably by metalloprotease activity. This cleavage mediates a translocation from the plasma membrane to the nucleus. Expressed in seeds, leaves, roots and inflorescence. Expressed in roots, rosette leaves, cauline leaves, shoot apex, stems and flowers.

It localises to the cell membrane. Its subcellular location is the nucleus. Its function is as follows. Transcriptional activator activated by proteolytic cleavage through regulated intramembrane proteolysis (RIP), probably via metalloprotease activity. Regulates gibberellic acid-mediated salt-responsive repression of seed germination and flowering via FT, thus delaying seed germination under high salinity conditions. The polypeptide is NAC domain-containing protein 40 (Arabidopsis thaliana (Mouse-ear cress)).